Here is a 454-residue protein sequence, read N- to C-terminus: Alkaline extracellular protease (454 aa).

The signal sequence occupies residues 1-15; the sequence is MKLATAFTILTAVLA. The propeptide occupies 16-157; that stretch reads APLAAPAPAP…EIPASSNAKR (142 aa). The region spanning 68–146 is the Inhibitor I9 domain; the sequence is FIVVFDSSAT…TVEPDTIVSL (79 aa). A glycan (N-linked (GlcNAc...) asparagine) is linked at Asn-123. A Peptidase S8 domain is found at 166–454; sequence QWGLSRISHK…NAVAYNGVGI (289 aa). Catalysis depends on charge relay system residues Asp-200, His-231, and Ser-397.

This sequence belongs to the peptidase S8 family. Post-translationally, the pro-region is removed through cleavage by XPR6 after Lys156-Arg157, which yields mature active XPR2. In terms of processing, the 10 consecutive -X-Ala- or -X-Pro- dipeptides located over 100 amino acids upstream of the N-terminal of mature XPR2 are subject to dipeptidyl aminopeptidase (DPAPase)-processing. DPAPase activity is not necessary for XPR6 cleavage and for secretion of mature active XPR2. N-glycosylated. Glycosylation within the pro-region has no effect on secretion and maturation at 18 degrees Celsius, but is required for secretion at 28 degrees Celsius.

It is found in the secreted. The enzyme catalyses Hydrolysis of proteins with broad specificity for peptide bonds, and a preference for a large uncharged residue in P1. Hydrolyzes peptide amides.. With respect to regulation, the protease activity is completely inhibited by the serine inhibitor PMSF but is not affected by thiol group inhibitors and in the presence of dithiothreitol. In the presence of high concentrations of o-phenanthroline the protease activity is only partially inhibited. The pro-region plays an inhibitory role and may provide a mechanism for preventing premature activation in the secretory pathway. Functionally, major secreted protein that belongs to the subtilisin family serine proteases. The polypeptide is Alkaline extracellular protease (Yarrowia lipolytica (strain CLIB 122 / E 150) (Yeast)).